The sequence spans 506 residues: Phenylacetaldehyde synthase (506 aa).

L-phenylalanine contacts are provided by Pro-101, His-202, and His-317. Lys-318 is modified (N6-(pyridoxal phosphate)lysine).

Belongs to the group II decarboxylase family. In terms of assembly, homotetramer. Requires pyridoxal 5'-phosphate as cofactor. As to expression, highly expressed in corolla limbs and at lower levels in corolla tubes and ovaries.

It carries out the reaction L-phenylalanine + O2 + H2O + H(+) = 2-phenylacetaldehyde + H2O2 + NH4(+) + CO2. Its function is as follows. Bifunctional enzyme that catalyzes the decarboxylation of L-phenylalanine to 2-phenylethylamine, which is then oxidized to form 2-phenylacetaldehyde, a constituent of floral scent. 2-phenylacetaldehyde is a precursor of 2-phenylethanol, another constituent of floral scent. The polypeptide is Phenylacetaldehyde synthase (Petunia hybrida (Petunia)).